A 2696-amino-acid polypeptide reads, in one-letter code: Protein ILITYHIA (2696 aa).

Residues 1–18 (MSYSMVNASSAVSSPETA) show a composition bias toward polar residues. The tract at residues 1–26 (MSYSMVNASSAVSSPETAKNSDEPPP) is disordered. 9 HEAT repeats span residues 162–204 (DIAP…MKTF), 253–290 (STQA…IYSL), 303–340 (KDSP…DVLN), 364–400 (EFQT…IDLS), 401–438 (KYAL…KSSN), 487–525 (SLSR…RSSV), 526–562 (AIQP…NPDT), 564–601 (SQIS…SKIA), and 642–677 (VVCV…FLLC). The interval 901-941 (KQEPSSNHSLKKGLASRETANSGRRDTAKLTKKADKGKTAK) is disordered. Basic and acidic residues predominate over residues 923 to 941 (GRRDTAKLTKKADKGKTAK). HEAT repeat units lie at residues 985-1021 (HSQL…CTVQ), 1082-1118 (DTFT…GLQA), 1188-1225 (HDLG…ESPS), 1273-1311 (KDLP…KHGK), 1315-1355 (SLLF…HLAR), 1358-1395 (PKVH…SKQE), 1397-1433 (APAL…GFGI), 1436-1474 (LKKY…KLGK), 1478-1515 (PYVI…QLSA), 1516-1553 (YGVK…CAPQ), 1564-1600 (PKLT…VIKN), 1601-1638 (PEIS…NSVD), 1640-1677 (PSLA…LVTE), 1683-1720 (PYIG…GMGE), 1722-1759 (NFPD…ALGT), 1761-1797 (YFEN…SLGA), 1801-1838 (KYLQ…HHAT), and 1840-1876 (SLPL…KVAG). The residue at position 1887 (Ser1887) is a Phosphoserine. HEAT repeat units follow at residues 1908-1945 (DKRN…NTPK), 1949-1986 (EIMP…KLGE), 1988-2024 (VLPL…SAGR), 2029-2066 (SFMD…SAGL), 2067-2102 (QAMD…VRTA), 2104-2137 (VLPH…AGFN), 2138-2175 (THLG…VIDE), 2177-2213 (GVET…SSKL), 2217-2254 (DEAP…SVPK), 2258-2292 (PSYI…LCLP), 2293-2330 (KSLK…VTSE), 2335-2373 (EFVI…RGGM), 2377-2414 (PFLP…LSTR), 2416-2450 (DPLV…HAGK), 2455-2492 (AVRV…YLEA), 2494-2530 (QLSV…HNPS), 2536-2573 (SLFS…KQLA), 2580-2617 (KVVI…DNPS), and 2620-2658 (MANI…LTKG).

It belongs to the GCN1 family.

Functionally, involved in immunity against bacterial infection and in non-host resistance. Required for embryo development. Required for systemic acquired resistance, but functions in an salicylic acid-independent manner. Required for bacterium-triggered stomatal closure response. The polypeptide is Protein ILITYHIA (Arabidopsis thaliana (Mouse-ear cress)).